The following is a 142-amino-acid chain: MATFNLTIVSAEQKIFEGEVKQIQVTGVEGELGILPGHTPLLTAIKPGIVKFTLKDGNEEVIYVSGGFLEVQPNIVTVLADIAIRGSELDADRIHEAKRKAEENIVSRGSDADHDLLVAKLSKELAKLRAYELTEKLLKTRR.

Belongs to the ATPase epsilon chain family. As to quaternary structure, F-type ATPases have 2 components, CF(1) - the catalytic core - and CF(0) - the membrane proton channel. CF(1) has five subunits: alpha(3), beta(3), gamma(1), delta(1), epsilon(1). CF(0) has three main subunits: a, b and c.

Its subcellular location is the cell inner membrane. In terms of biological role, produces ATP from ADP in the presence of a proton gradient across the membrane. The sequence is that of ATP synthase epsilon chain from Haemophilus influenzae (strain 86-028NP).